Consider the following 628-residue polypeptide: Nucleoside-triphosphatase 2 (628 aa).

Residues 1 to 25 (MWLPVYVPLLLVFGVSLSLPHGSLG) form the signal peptide. The active-site Proton acceptor is E236. N-linked (GlcNAc...) asparagine glycosylation occurs at N432.

Belongs to the GDA1/CD39 NTPase family. As to quaternary structure, homotetramer.

The protein resides in the secreted. Its subcellular location is the parasitophorous vacuole. The enzyme catalyses a ribonucleoside 5'-triphosphate + H2O = a ribonucleoside 5'-diphosphate + phosphate + H(+). Its function is as follows. May perform an important processing step in the conversion of high energy nucleotides prior to uptake by the parasite. NTPAse-II has a specific activity 4.5-fold lower than NTPAse-I in hydrolysis of ATP. The primary difference between these isozymes lies in their ability to hydrolyze nucleoside triphosphate versus diphosphate substrates. While NTPAse-II hydrolyzes ATP to ADP and ADP to AMP at almost the same rate, NTPAse-I hydrolyzes ADP to AMP at a much slower rate (0.7% of the rate for ATP). The polypeptide is Nucleoside-triphosphatase 2 (NTP1) (Toxoplasma gondii).